We begin with the raw amino-acid sequence, 606 residues long: Pentatricopeptide repeat-containing protein At1g31920 (606 aa).

PPR repeat units lie at residues 96 to 130 (CTFDFNTMIRGYVNVMSFEEALCFYNEMMQRGNEP), 131 to 165 (DNFTYPCLLKACTRLKSIREGKQIHGQVFKLGLEA), 166 to 200 (DVFVQNSLINMYGRCGEMELSSAVFEKLESKTAAS), 201 to 227 (WSSMVSARAGMGMWSECLLLFRGMCSE), 233 to 263 (EESGMVSALLACANTGALNLGMSIHGFLLRN), 268 to 298 (NIIVQTSLVDMYVKCGCLDKALHIFQKMEKR), 299 to 333 (NNLTYSAMISGLALHGEGESALRMFSKMIKEGLEP), 334 to 368 (DHVVYVSVLNACSHSGLVKEGRRVFAEMLKEGKVE), and 370 to 404 (TAEHYGCLVDLLGRAGLLEEALETIQSIPIEKNDV). Residues 405 to 480 (IWRTFLSQCR…TPGFSIVELK (76 aa)) are type E motif. The tract at residues 481-511 (GKTHRFVSQDRSHPKCKEIYKMLHQMEWQLK) is type E(+) motif. A type DYW motif region spans residues 512–606 (FEGYSPDLTQ…GGTCSCKDYW (95 aa)).

Belongs to the PPR family. PCMP-H subfamily.

In Arabidopsis thaliana (Mouse-ear cress), this protein is Pentatricopeptide repeat-containing protein At1g31920 (PCMP-H11).